The primary structure comprises 142 residues: Large ribosomal subunit protein uL11 (142 aa).

This sequence belongs to the universal ribosomal protein uL11 family. In terms of assembly, part of the ribosomal stalk of the 50S ribosomal subunit. Interacts with L10 and the large rRNA to form the base of the stalk. L10 forms an elongated spine to which L12 dimers bind in a sequential fashion forming a multimeric L10(L12)X complex. In terms of processing, one or more lysine residues are methylated.

Forms part of the ribosomal stalk which helps the ribosome interact with GTP-bound translation factors. The sequence is that of Large ribosomal subunit protein uL11 from Hahella chejuensis (strain KCTC 2396).